Consider the following 301-residue polypeptide: tRNA dimethylallyltransferase (301 aa).

8-15 (GPTAVGKT) is a binding site for ATP. 10-15 (TAVGKT) contacts substrate. An interaction with substrate tRNA region spans residues 33 to 36 (DSRQ).

The protein belongs to the IPP transferase family. Monomer. Mg(2+) serves as cofactor.

The enzyme catalyses adenosine(37) in tRNA + dimethylallyl diphosphate = N(6)-dimethylallyladenosine(37) in tRNA + diphosphate. Its function is as follows. Catalyzes the transfer of a dimethylallyl group onto the adenine at position 37 in tRNAs that read codons beginning with uridine, leading to the formation of N6-(dimethylallyl)adenosine (i(6)A). The polypeptide is tRNA dimethylallyltransferase (Thermosipho africanus (strain TCF52B)).